The sequence spans 209 residues: ATP phosphoribosyltransferase (209 aa).

The protein belongs to the ATP phosphoribosyltransferase family. Short subfamily. As to quaternary structure, heteromultimer composed of HisG and HisZ subunits.

The protein resides in the cytoplasm. It catalyses the reaction 1-(5-phospho-beta-D-ribosyl)-ATP + diphosphate = 5-phospho-alpha-D-ribose 1-diphosphate + ATP. It functions in the pathway amino-acid biosynthesis; L-histidine biosynthesis; L-histidine from 5-phospho-alpha-D-ribose 1-diphosphate: step 1/9. Its function is as follows. Catalyzes the condensation of ATP and 5-phosphoribose 1-diphosphate to form N'-(5'-phosphoribosyl)-ATP (PR-ATP). Has a crucial role in the pathway because the rate of histidine biosynthesis seems to be controlled primarily by regulation of HisG enzymatic activity. The protein is ATP phosphoribosyltransferase of Alkaliphilus metalliredigens (strain QYMF).